Here is a 578-residue protein sequence, read N- to C-terminus: Probable arginine--tRNA ligase, mitochondrial (578 aa).

The transit peptide at 1 to 16 (MACGFRRAIACQLSRV) directs the protein to the mitochondrion. L-arginine contacts are provided by residues 133 to 135 (SPN), His-144, Tyr-322, Asp-326, and Gln-350. Residues 133 to 144 (SPNVAKKFHVGH) carry the 'HIGH' region motif. Lys-568 carries the N6-acetyllysine modification.

This sequence belongs to the class-I aminoacyl-tRNA synthetase family.

The protein resides in the mitochondrion membrane. The enzyme catalyses tRNA(Arg) + L-arginine + ATP = L-arginyl-tRNA(Arg) + AMP + diphosphate. In terms of biological role, catalyzes the attachment of arginine to tRNA(Arg) in a two-step reaction: arginine is first activated by ATP to form Arg-AMP and then transferred to the acceptor end of tRNA(Arg). This is Probable arginine--tRNA ligase, mitochondrial (RARS2) from Homo sapiens (Human).